A 104-amino-acid chain; its full sequence is Small ribosomal subunit protein uS10 (104 aa).

The protein belongs to the universal ribosomal protein uS10 family. Part of the 30S ribosomal subunit.

Functionally, involved in the binding of tRNA to the ribosomes. The sequence is that of Small ribosomal subunit protein uS10 from Aliarcobacter butzleri (strain RM4018) (Arcobacter butzleri).